The sequence spans 122 residues: Yop proteins translocation protein X (122 aa).

The stretch at 71–87 (HRAQDYRRELDTLQSLL) forms a coiled coil.

In terms of assembly, interacts with YscY.

The protein resides in the secreted. Required for Yop secretion. The protein is Yop proteins translocation protein X (yscX) of Yersinia enterocolitica.